The following is a 99-amino-acid chain: DNA-binding protein Fis (99 aa).

The segment at residues 75–94 is a DNA-binding region (H-T-H motif); it reads QTRAATMLGINRGTLRKKLK.

Belongs to the transcriptional regulatory Fis family. Homodimer.

In terms of biological role, activates ribosomal RNA transcription. Plays a direct role in upstream activation of rRNA promoters. This Pasteurella multocida (strain Pm70) protein is DNA-binding protein Fis.